A 393-amino-acid chain; its full sequence is Acetate kinase (393 aa).

N7 lines the Mg(2+) pocket. K14 provides a ligand contact to ATP. R87 serves as a coordination point for substrate. D144 functions as the Proton donor/acceptor in the catalytic mechanism. Residues 202–206, 277–279, and 326–330 each bind ATP; these read HIGNG, DLR, and GVGEN. E380 contributes to the Mg(2+) binding site.

It belongs to the acetokinase family. Homodimer. Mg(2+) is required as a cofactor. It depends on Mn(2+) as a cofactor.

It localises to the cytoplasm. The catalysed reaction is acetate + ATP = acetyl phosphate + ADP. Its pathway is metabolic intermediate biosynthesis; acetyl-CoA biosynthesis; acetyl-CoA from acetate: step 1/2. In terms of biological role, catalyzes the formation of acetyl phosphate from acetate and ATP. Can also catalyze the reverse reaction. The sequence is that of Acetate kinase from Mycoplasmopsis pulmonis (strain UAB CTIP) (Mycoplasma pulmonis).